Consider the following 320-residue polypeptide: o-succinylbenzoate synthase (320 aa).

Lysine 133 (proton donor) is an active-site residue. Mg(2+) is bound by residues aspartate 161, glutamate 190, and aspartate 213. Residue lysine 235 is the Proton acceptor of the active site.

The protein belongs to the mandelate racemase/muconate lactonizing enzyme family. MenC type 1 subfamily. Requires a divalent metal cation as cofactor.

The catalysed reaction is (1R,6R)-6-hydroxy-2-succinyl-cyclohexa-2,4-diene-1-carboxylate = 2-succinylbenzoate + H2O. It functions in the pathway quinol/quinone metabolism; 1,4-dihydroxy-2-naphthoate biosynthesis; 1,4-dihydroxy-2-naphthoate from chorismate: step 4/7. The protein operates within quinol/quinone metabolism; menaquinone biosynthesis. Converts 2-succinyl-6-hydroxy-2,4-cyclohexadiene-1-carboxylate (SHCHC) to 2-succinylbenzoate (OSB). The protein is o-succinylbenzoate synthase of Escherichia coli O139:H28 (strain E24377A / ETEC).